The chain runs to 470 residues: 3-isopropylmalate dehydratase large subunit (470 aa).

The [4Fe-4S] cluster site is built by cysteine 351, cysteine 411, and cysteine 414.

It belongs to the aconitase/IPM isomerase family. LeuC type 1 subfamily. As to quaternary structure, heterodimer of LeuC and LeuD. The cofactor is [4Fe-4S] cluster.

It carries out the reaction (2R,3S)-3-isopropylmalate = (2S)-2-isopropylmalate. The protein operates within amino-acid biosynthesis; L-leucine biosynthesis; L-leucine from 3-methyl-2-oxobutanoate: step 2/4. In terms of biological role, catalyzes the isomerization between 2-isopropylmalate and 3-isopropylmalate, via the formation of 2-isopropylmaleate. The polypeptide is 3-isopropylmalate dehydratase large subunit (Shewanella frigidimarina (strain NCIMB 400)).